Consider the following 420-residue polypeptide: Glutamate dehydrogenase (420 aa).

K105 is an active-site residue. Residue 220 to 226 (GYGNAGY) participates in NAD(+) binding.

The protein belongs to the Glu/Leu/Phe/Val dehydrogenases family. As to quaternary structure, homohexamer.

It is found in the cytoplasm. The enzyme catalyses L-glutamate + NAD(+) + H2O = 2-oxoglutarate + NH4(+) + NADH + H(+). The catalysed reaction is L-glutamate + NADP(+) + H2O = 2-oxoglutarate + NH4(+) + NADPH + H(+). The sequence is that of Glutamate dehydrogenase (gdhA) from Pyrococcus horikoshii (strain ATCC 700860 / DSM 12428 / JCM 9974 / NBRC 100139 / OT-3).